The chain runs to 254 residues: Methyltransferase-like protein 23 (254 aa).

The segment at 1–27 (MKSFIFRQNPRKQQQEQNNLVDYSDSD) is disordered. Residues 11–21 (RKQQQEQNNLV) are compositionally biased toward polar residues.

The protein belongs to the methyltransferase superfamily. METTL23 family.

Its function is as follows. Probable methyltransferase. This is Methyltransferase-like protein 23 from Dictyostelium discoideum (Social amoeba).